The following is a 186-amino-acid chain: TATA-box-binding protein F (186 aa).

A run of 2 repeats spans residues 10–86 (IENV…FDDL) and 101–179 (VQNI…NDRL).

Belongs to the TBP family.

General factor that plays a role in the activation of archaeal genes transcribed by RNA polymerase. Binds specifically to the TATA box promoter element which lies close to the position of transcription initiation. The polypeptide is TATA-box-binding protein F (tbpF) (Halobacterium salinarum (strain ATCC 700922 / JCM 11081 / NRC-1) (Halobacterium halobium)).